Reading from the N-terminus, the 308-residue chain is MIDRFGRPLEDLRITLTHVCNFECFFCHMEGEEGDNYILSKEDILLVAKVAKNFGINSVKLTGGEPTLRRDLVEIVRGLKQLGYRDVSMTTNGFLLKDLAYKLKLAGLDRINVSLHAISRETFKKITGVDAFDRVIEGIKSAIDVGLVPVKLNFVVNRRNREEVFKFIELSQNLGVNEIHLIELHPVGLGKLAFKEHDDLREIEEYIEKISIKKQIRKKHFRPRYVLPSGLIVEVVKPYANPIFCAGCNRIRLSVDGKLKTCLYREDNVIDILDILKGEYSEDVKEELLGRAFMIAIAIREPNFKYKI.

The 221-residue stretch at 4-224 (RFGRPLEDLR…QIRKKHFRPR (221 aa)) folds into the Radical SAM core domain. Residue arginine 13 coordinates GTP. Cysteine 20, cysteine 24, and cysteine 27 together coordinate [4Fe-4S] cluster. GTP is bound at residue lysine 60. Residue glycine 64 coordinates S-adenosyl-L-methionine. Position 90 (threonine 90) interacts with GTP. Residue serine 114 coordinates S-adenosyl-L-methionine. Position 151 (lysine 151) interacts with GTP. Positions 245 and 248 each coordinate [4Fe-4S] cluster. 250-252 (RIR) lines the GTP pocket. Position 262 (cysteine 262) interacts with [4Fe-4S] cluster.

It belongs to the radical SAM superfamily. MoaA family. The cofactor is [4Fe-4S] cluster.

The enzyme catalyses GTP + AH2 + S-adenosyl-L-methionine = (8S)-3',8-cyclo-7,8-dihydroguanosine 5'-triphosphate + 5'-deoxyadenosine + L-methionine + A + H(+). It participates in cofactor biosynthesis; molybdopterin biosynthesis. Functionally, catalyzes the cyclization of GTP to (8S)-3',8-cyclo-7,8-dihydroguanosine 5'-triphosphate. This Saccharolobus islandicus (strain M.16.27) (Sulfolobus islandicus) protein is Probable GTP 3',8-cyclase.